A 275-amino-acid chain; its full sequence is tRNA (guanine-N(1)-)-methyltransferase (275 aa).

S-adenosyl-L-methionine-binding positions include Gly124 and 149-154 (IGDYVL).

It belongs to the RNA methyltransferase TrmD family. In terms of assembly, homodimer.

It localises to the cytoplasm. It carries out the reaction guanosine(37) in tRNA + S-adenosyl-L-methionine = N(1)-methylguanosine(37) in tRNA + S-adenosyl-L-homocysteine + H(+). Functionally, specifically methylates guanosine-37 in various tRNAs. This is tRNA (guanine-N(1)-)-methyltransferase from Bifidobacterium animalis subsp. lactis (strain AD011).